A 107-amino-acid chain; its full sequence is Nucleoid-associated protein GOX0603 (107 aa).

This sequence belongs to the YbaB/EbfC family. As to quaternary structure, homodimer.

It localises to the cytoplasm. Its subcellular location is the nucleoid. Its function is as follows. Binds to DNA and alters its conformation. May be involved in regulation of gene expression, nucleoid organization and DNA protection. The polypeptide is Nucleoid-associated protein GOX0603 (Gluconobacter oxydans (strain 621H) (Gluconobacter suboxydans)).